A 474-amino-acid chain; its full sequence is ATP synthase subunit beta (474 aa).

153 to 160 (GGAGVGKT) lines the ATP pocket.

This sequence belongs to the ATPase alpha/beta chains family. As to quaternary structure, F-type ATPases have 2 components, CF(1) - the catalytic core - and CF(0) - the membrane proton channel. CF(1) has five subunits: alpha(3), beta(3), gamma(1), delta(1), epsilon(1). CF(0) has three main subunits: a(1), b(2) and c(9-12). The alpha and beta chains form an alternating ring which encloses part of the gamma chain. CF(1) is attached to CF(0) by a central stalk formed by the gamma and epsilon chains, while a peripheral stalk is formed by the delta and b chains.

Its subcellular location is the cell inner membrane. It carries out the reaction ATP + H2O + 4 H(+)(in) = ADP + phosphate + 5 H(+)(out). Its function is as follows. Produces ATP from ADP in the presence of a proton gradient across the membrane. The catalytic sites are hosted primarily by the beta subunits. The polypeptide is ATP synthase subunit beta (Neorickettsia sennetsu (strain ATCC VR-367 / Miyayama) (Ehrlichia sennetsu)).